A 117-amino-acid chain; its full sequence is Prefoldin subunit beta (117 aa).

Belongs to the prefoldin subunit beta family. Heterohexamer of two alpha and four beta subunits.

Its subcellular location is the cytoplasm. Molecular chaperone capable of stabilizing a range of proteins. Seems to fulfill an ATP-independent, HSP70-like function in archaeal de novo protein folding. The polypeptide is Prefoldin subunit beta (Pyrococcus furiosus (strain ATCC 43587 / DSM 3638 / JCM 8422 / Vc1)).